We begin with the raw amino-acid sequence, 402 residues long: Arabinosyltransferase RRA1 (402 aa).

At 1 to 13 the chain is on the cytoplasmic side; sequence MAVRKEKVQPFRE. Residues 14–34 traverse the membrane as a helical; Signal-anchor for type II membrane protein segment; sequence CGIAIAVLVGIFIGCVCTILI. The Lumenal segment spans residues 35–402; it reads PNDFVNFRSS…DALDRFRDGS (368 aa). Residues 225–227 carry the DXD motif motif; the sequence is DVD. N-linked (GlcNAc...) asparagine glycosylation is present at N253.

The protein belongs to the glycosyltransferase 77 family. In terms of tissue distribution, expressed in leaf meristem and at points of cauline leaf attachments on the primary stem. Expressed at low levels in siliques.

The protein localises to the golgi apparatus membrane. Plays a role in the arabinosylation of cell wall components. Involved in the arabinosylation of extensin proteins in root hair cells. Extensins are structural glycoproteins present in cell walls and its arabinosylation is important for root hair cell development. This chain is Arabinosyltransferase RRA1, found in Arabidopsis thaliana (Mouse-ear cress).